Consider the following 160-residue polypeptide: NADH-quinone oxidoreductase subunit I (160 aa).

2 4Fe-4S ferredoxin-type domains span residues Arg52–Glu81 and Thr91–Asn120. [4Fe-4S] cluster contacts are provided by Cys61, Cys64, Cys67, Cys71, Cys100, Cys103, Cys106, and Cys110.

The protein belongs to the complex I 23 kDa subunit family. In terms of assembly, NDH-1 is composed of 14 different subunits. Subunits NuoA, H, J, K, L, M, N constitute the membrane sector of the complex. [4Fe-4S] cluster serves as cofactor.

Its subcellular location is the cell membrane. The enzyme catalyses a quinone + NADH + 5 H(+)(in) = a quinol + NAD(+) + 4 H(+)(out). NDH-1 shuttles electrons from NADH, via FMN and iron-sulfur (Fe-S) centers, to quinones in the respiratory chain. The immediate electron acceptor for the enzyme in this species is believed to be ubiquinone. Couples the redox reaction to proton translocation (for every two electrons transferred, four hydrogen ions are translocated across the cytoplasmic membrane), and thus conserves the redox energy in a proton gradient. The polypeptide is NADH-quinone oxidoreductase subunit I (Wolbachia sp. subsp. Brugia malayi (strain TRS)).